Here is a 980-residue protein sequence, read N- to C-terminus: Hypoxia up-regulated protein 1 (980 aa).

An N-terminal signal peptide occupies residues methionine 1–serine 24. 2 disordered regions span residues glutamate 558 to valine 682 and lysine 894 to leucine 980. Composition is skewed to basic and acidic residues over residues alanine 599–lysine 656 and lysine 896–serine 906. The segment covering threonine 907 to threonine 916 has biased composition (polar residues). 2 stretches are compositionally biased toward basic and acidic residues: residues aspartate 918–glutamate 949 and threonine 960–leucine 980. A Prevents secretion from ER motif is present at residues glutamate 977–leucine 980.

This sequence belongs to the heat shock protein 70 family.

The protein localises to the endoplasmic reticulum lumen. In terms of biological role, has a pivotal role in cytoprotective cellular mechanisms triggered by oxygen deprivation. May play a role as a molecular chaperone and participate in protein folding. The sequence is that of Hypoxia up-regulated protein 1 (hyou1) from Danio rerio (Zebrafish).